Consider the following 319-residue polypeptide: Proline hydroxylase buaE (319 aa).

The 113-residue stretch at asparagine 168–proline 280 folds into the Fe2OG dioxygenase domain. Positions 195, 197, and 255 each coordinate Fe cation. Arginine 271 is a 2-oxoglutarate binding site.

This sequence belongs to the iron/ascorbate-dependent oxidoreductase family. Fe(2+) is required as a cofactor.

It participates in mycotoxin biosynthesis. In terms of biological role, proline hydroxylase; part of the gene cluster that mediates the biosynthesis of burnettramic acids, an unusual class of bolaamphiphilic pyrrolizidinediones that display potent antibacterial, antifungal, and cytotoxic activities. The first step of the biosynthesis of burnettramic acids is the hydroxylation of proline by the proline hydroxylase buaE to generate 4-hydroxyproline. The PKS-NRPS buaA and trans-enoyl reductase buaC construct the highly reduced polyketide chain, and the condensation (C) domain of buaA then catalyzes the amide bond formation with the activated 4-hydroxyproline. This is followed by the R domain releasing the nascent polyketide-peptide directly via a Dieckmann condensation to afford a tetramic acid fused to the hydroxyproline, generating the bicyclic pyrrolidinedione moiety. The cytochrome P450 monooxygenases buaD and buaG are likely responsible for the multiple hydroxylations on the polyketide chain and its terminus, although in the heterologous context, buaD does not appear to be required. Therefore, while buaG may be a multifunctional cytochrome P450 monooxygenase, it cannot be ruled out that the two secondary alcohols on the polyketide chain could have an acetate origin. Finally, the glycosyltransferase buaB transfers beta-D-mannose to the aglycone burnettramic acid A to form burnettramic acid A. Burnettramic acid B is a minor cis-pyrrolizidine epimer of burnettramic acid A and it is likely that small amounts of it form naturally in acidic environments. This chain is Proline hydroxylase buaE, found in Petromyces alliaceus (Aspergillus alliaceus).